Consider the following 379-residue polypeptide: Probable pectin lyase B (379 aa).

The signal sequence occupies residues 1–20 (MHYKLLFAAAAASLASAVSA). 2 disulfides stabilise this stretch: Cys83-Cys102 and Cys92-Cys226. Residues Asn129 and Asn252 are each glycosylated (N-linked (GlcNAc...) asparagine). Arg256 is a catalytic residue. Cys323 and Cys331 are oxidised to a cystine.

This sequence belongs to the polysaccharide lyase 1 family.

It localises to the secreted. The enzyme catalyses Eliminative cleavage of (1-&gt;4)-alpha-D-galacturonan methyl ester to give oligosaccharides with 4-deoxy-6-O-methyl-alpha-D-galact-4-enuronosyl groups at their non-reducing ends.. Pectinolytic enzymes consist of four classes of enzymes: pectin lyase, polygalacturonase, pectin methylesterase and rhamnogalacturonase. Among pectinolytic enzymes, pectin lyase is the most important in depolymerization of pectin, since it cleaves internal glycosidic bonds of highly methylated pectins. The sequence is that of Probable pectin lyase B (pelB) from Aspergillus niger (strain ATCC MYA-4892 / CBS 513.88 / FGSC A1513).